The primary structure comprises 200 residues: Peptidyl-tRNA hydrolase (200 aa).

Tyr15 is a binding site for tRNA. His20 functions as the Proton acceptor in the catalytic mechanism. Residues Phe66, Asn68, and Asn114 each coordinate tRNA.

This sequence belongs to the PTH family. In terms of assembly, monomer.

The protein resides in the cytoplasm. The enzyme catalyses an N-acyl-L-alpha-aminoacyl-tRNA + H2O = an N-acyl-L-amino acid + a tRNA + H(+). In terms of biological role, hydrolyzes ribosome-free peptidyl-tRNAs (with 1 or more amino acids incorporated), which drop off the ribosome during protein synthesis, or as a result of ribosome stalling. Functionally, catalyzes the release of premature peptidyl moieties from peptidyl-tRNA molecules trapped in stalled 50S ribosomal subunits, and thus maintains levels of free tRNAs and 50S ribosomes. This Ralstonia pickettii (strain 12J) protein is Peptidyl-tRNA hydrolase.